A 398-amino-acid polypeptide reads, in one-letter code: 1-deoxy-D-xylulose 5-phosphate reductoisomerase (398 aa).

NADPH contacts are provided by T11, G12, S13, I14, and N125. 1-deoxy-D-xylulose 5-phosphate is bound at residue K126. Residue E127 coordinates NADPH. Residue D151 participates in Mn(2+) binding. Residues S152, E153, S186, and H209 each coordinate 1-deoxy-D-xylulose 5-phosphate. E153 contacts Mn(2+). G215 lines the NADPH pocket. 4 residues coordinate 1-deoxy-D-xylulose 5-phosphate: S222, N227, K228, and E231. A Mn(2+)-binding site is contributed by E231.

The protein belongs to the DXR family. Requires Mg(2+) as cofactor. The cofactor is Mn(2+).

It carries out the reaction 2-C-methyl-D-erythritol 4-phosphate + NADP(+) = 1-deoxy-D-xylulose 5-phosphate + NADPH + H(+). Its pathway is isoprenoid biosynthesis; isopentenyl diphosphate biosynthesis via DXP pathway; isopentenyl diphosphate from 1-deoxy-D-xylulose 5-phosphate: step 1/6. Functionally, catalyzes the NADPH-dependent rearrangement and reduction of 1-deoxy-D-xylulose-5-phosphate (DXP) to 2-C-methyl-D-erythritol 4-phosphate (MEP). This is 1-deoxy-D-xylulose 5-phosphate reductoisomerase from Acinetobacter baumannii (strain ACICU).